The primary structure comprises 172 residues: MALLPILEFPDPRLRTIAKPVAKVDQRIRTLIDDMFETMYDAPGIGLAATQVNVHEQVLVIDLGEETKEPMVFINPSIEILDQEHYEYEEGCLSVPGFYEQVSRPKHIRVTALDRDGKEFVIEPEGLLAVCVQHEMDHLNGKLFVDYVSNIKRQRIRKKLEKQHRQAAQSVG.

Fe cation contacts are provided by Cys-92 and His-134. Glu-135 is a catalytic residue. A Fe cation-binding site is contributed by His-138.

The protein belongs to the polypeptide deformylase family. It depends on Fe(2+) as a cofactor.

The enzyme catalyses N-terminal N-formyl-L-methionyl-[peptide] + H2O = N-terminal L-methionyl-[peptide] + formate. In terms of biological role, removes the formyl group from the N-terminal Met of newly synthesized proteins. Requires at least a dipeptide for an efficient rate of reaction. N-terminal L-methionine is a prerequisite for activity but the enzyme has broad specificity at other positions. The polypeptide is Peptide deformylase (Saccharophagus degradans (strain 2-40 / ATCC 43961 / DSM 17024)).